We begin with the raw amino-acid sequence, 275 residues long: Lectin (275 aa).

The signal sequence occupies residues 1–30 (MASLQTQMISFYLIFLSILLTTIFFFKVNS). D-glucose-binding residues include Asp111 and Gly129. The Mn(2+) site is built by Glu149 and Asp151. Positions 151, 153, 155, and 159 each coordinate Ca(2+). 2 residues coordinate Mn(2+): Asp159 and His166. Positions 211–217 (NSLEEEN) are excised as a propeptide. 2 residues coordinate D-glucose: Gly246 and Ala247. Residues 270 to 275 (KQAADA) constitute a propeptide that is removed on maturation.

The protein belongs to the leguminous lectin family. In terms of assembly, heterotetramer of two alpha and two beta chains. Post-translationally, the mature form consists of two chains, alpha and beta, produced by cleavage of the immature protein. These remain cleaved, yet fold together to form one subunit.

Functionally, D-mannose specific lectin. The protein is Lectin of Lens culinaris subsp. tomentosus (Lentil).